We begin with the raw amino-acid sequence, 692 residues long: 5-taurinomethyluridine-[tRNA] synthase subunit MTO1, mitochondrial (692 aa).

The transit peptide at 1–25 (MFYFRGCGRWVAASFTKLQFPLARL) directs the protein to the mitochondrion. FAD contacts are provided by residues 43 to 48 (GGGHAG), valine 155, serine 218, and glutamine 407. N6-methyllysine is present on lysine 508.

This sequence belongs to the MnmG family. Homodimer; forms a dimer in the presence of potassium. Interacts with GTPBP3; forms the GTPBP3-MTO1 complex composed of homodimers of GTPBP3 and MTO1. FAD serves as cofactor.

It is found in the mitochondrion. It catalyses the reaction 5,10-methylenetetrahydrofolate + uridine(34) in tRNA + taurine + GTP + A + H2O = 5-taurinomethyluridine(34) in tRNA + 7,8-dihydrofolate + GDP + AH2 + phosphate + H(+). Component of the GTPBP3-MTO1 complex that catalyzes the 5-taurinomethyluridine (taum(5)U) modification at the 34th wobble position (U34) of mitochondrial tRNAs (mt-tRNAs), which plays a role in mt-tRNA decoding and mitochondrial translation. Taum(5)U formation on mammalian mt-tRNA requires the presence of both GTPBP3-mediated GTPase activity and MTO1 catalytic activity. The sequence is that of 5-taurinomethyluridine-[tRNA] synthase subunit MTO1, mitochondrial (MTO1) from Pongo abelii (Sumatran orangutan).